A 499-amino-acid polypeptide reads, in one-letter code: Alpha-L-arabinofuranosidase B (499 aa).

A signal peptide spans 1 to 17 (MFSRRNLLALGLAATVS). The catalytic stretch occupies residues 18–335 (AGPCDIYEAG…ENIVAAKYVV (318 aa)). 3 cysteine pairs are disulfide-bonded: Cys21–Cys31, Cys81–Cys86, and Cys176–Cys177. An N-linked (GlcNAc...) asparagine glycan is attached at Asn83. N-linked (GlcNAc...) asparagine glycosylation occurs at Asn202. Substrate is bound at residue Asp219. Glu221 functions as the Nucleophile in the catalytic mechanism. Residues Asn222, Asn223, and Gly296 each coordinate substrate. Residue Asp297 is the Proton donor of the active site. An ABD region spans residues 336 to 499 (GSLVSGPSFT…SFEIETAFAS (164 aa)). A disulfide bridge links Cys401 with Cys439. 8 residues coordinate substrate: His416, Asn418, Phe419, Asp435, His463, Glu465, Leu468, and Asp488.

It belongs to the glycosyl hydrolase 54 family.

The protein resides in the secreted. It catalyses the reaction Hydrolysis of terminal non-reducing alpha-L-arabinofuranoside residues in alpha-L-arabinosides.. Its pathway is glycan metabolism; L-arabinan degradation. Functionally, alpha-L-arabinofuranosidase involved in the degradation of arabinoxylan, a major component of plant hemicellulose. Able to hydrolyze 1,5-, 1,3- and 1,2-alpha-linkages not only in L-arabinofuranosyl oligosaccharides, but also in polysaccharides containing terminal non-reducing L-arabinofuranoses in side chains, like L-arabinan, arabinogalactan and arabinoxylan. This is Alpha-L-arabinofuranosidase B (abfB) from Aspergillus kawachii (strain NBRC 4308) (White koji mold).